A 686-amino-acid polypeptide reads, in one-letter code: MATDPRKILVTCALPYANGSIHLGHMLEHIQADIWVRYQRLRGNDVNFICADDAHGTPIMLKAQQMGISPEEMIAAVSEEHQKDFAGFDISFDNYHSTHSDENRELASHIYLELKKNGFITSRTISQLFDPEKEMFLPDRFVKGTCPKCKAEEQYGDNCDNCGETYSPTDLINPKSAVSGATPVMKDSEHFFFDLPQFESMLKEWTRSGSLQTETANKMQEWFESGLQQWDISRDAPYFGFEIPGETNKFFYVWLDAPIGYMGSFKNLCNKRDDLNFDEYWKKDSTTELYHFIGKDIVYFHSLFWPAMLDGAGFRKPNNVFVHGYVTVNGAKMSKSKGTFIKAGTYLNHLDPECLRYYYAAKLNSRIDDLDLNLEDFTQRVNSDVVNKIVNLASRNAGFITKRFDGKLADNFAEPELYNEFIAAADRIAELYETREFGRAIREITALADKANQYIDEKAPWVLAKEEGKEQELQEVSSVGINLFRVLMAYLKPVMPELAARTEAFLNETLTWEGVAQPLVAHEITKFKALFARIDPKKVEAMIEESKEDAAIEMAAKEKAEAEKEKASQTELDKDPIADEIEFDAFEAVDMRIARIISCEEVPKANKLLKFQLDIGGETRQVFSGIKSAYKPEELEGKLTVMVANLKPRKMKFGMSEGMILAAGPGGKDLWILEPHEGAQPGMRVM.

Positions 15–25 match the 'HIGH' region motif; that stretch reads PYANGSIHLGH. Zn(2+) contacts are provided by C146, C149, C159, and C162. The 'KMSKS' region motif lies at 332 to 336; that stretch reads KMSKS. K335 provides a ligand contact to ATP. In terms of domain architecture, tRNA-binding spans 585-686; it reads AFEAVDMRIA…EGAQPGMRVM (102 aa).

Belongs to the class-I aminoacyl-tRNA synthetase family. MetG type 1 subfamily. As to quaternary structure, homodimer. The cofactor is Zn(2+).

The protein localises to the cytoplasm. The enzyme catalyses tRNA(Met) + L-methionine + ATP = L-methionyl-tRNA(Met) + AMP + diphosphate. Functionally, is required not only for elongation of protein synthesis but also for the initiation of all mRNA translation through initiator tRNA(fMet) aminoacylation. This Aliivibrio fischeri (strain MJ11) (Vibrio fischeri) protein is Methionine--tRNA ligase.